Reading from the N-terminus, the 138-residue chain is uncharacterized protein (138 aa).

Disordered stretches follow at residues 1–23 (MPESAPSTPPSVNRRHEPEMLSE) and 35–83 (ASPS…EDPV). Residues 60–69 (DEETIPEEDD) show a composition bias toward acidic residues.

This is an uncharacterized protein from Schizosaccharomyces pombe (strain 972 / ATCC 24843) (Fission yeast).